The sequence spans 65 residues: Large ribosomal subunit protein bL28 (65 aa).

The tract at residues 1–26 is disordered; sequence MARRDALTGKSALSGQSRSHALNATK. Positions 11 to 22 are enriched in polar residues; the sequence is SALSGQSRSHAL.

The protein belongs to the bacterial ribosomal protein bL28 family.

This Mycoplasma mycoides subsp. mycoides SC (strain CCUG 32753 / NCTC 10114 / PG1) protein is Large ribosomal subunit protein bL28.